We begin with the raw amino-acid sequence, 164 residues long: MIILGIDPGSRKTGYGIISKQGNRLIHVDNGAIFTQSAKDFPERLEKIFTGLSEIIAQYRPEVVAVEDVFLAKNAQSALKLGQARGAAIVAAVNVGLPVHEYTAMQVKQAVVGTGRAEKAQVQQMIKALLNLPEVAQEDASDALAVAICHAHSAGINALFKNVR.

Active-site residues include aspartate 7, glutamate 67, and aspartate 139. Positions 7, 67, and 139 each coordinate Mg(2+).

It belongs to the RuvC family. In terms of assembly, homodimer which binds Holliday junction (HJ) DNA. The HJ becomes 2-fold symmetrical on binding to RuvC with unstacked arms; it has a different conformation from HJ DNA in complex with RuvA. In the full resolvosome a probable DNA-RuvA(4)-RuvB(12)-RuvC(2) complex forms which resolves the HJ. Mg(2+) serves as cofactor.

The protein resides in the cytoplasm. The enzyme catalyses Endonucleolytic cleavage at a junction such as a reciprocal single-stranded crossover between two homologous DNA duplexes (Holliday junction).. Its function is as follows. The RuvA-RuvB-RuvC complex processes Holliday junction (HJ) DNA during genetic recombination and DNA repair. Endonuclease that resolves HJ intermediates. Cleaves cruciform DNA by making single-stranded nicks across the HJ at symmetrical positions within the homologous arms, yielding a 5'-phosphate and a 3'-hydroxyl group; requires a central core of homology in the junction. The consensus cleavage sequence is 5'-(A/T)TT(C/G)-3'. Cleavage occurs on the 3'-side of the TT dinucleotide at the point of strand exchange. HJ branch migration catalyzed by RuvA-RuvB allows RuvC to scan DNA until it finds its consensus sequence, where it cleaves and resolves the cruciform DNA. This is Crossover junction endodeoxyribonuclease RuvC from Citrifermentans bemidjiense (strain ATCC BAA-1014 / DSM 16622 / JCM 12645 / Bem) (Geobacter bemidjiensis).